A 380-amino-acid chain; its full sequence is Cytochrome b (380 aa).

A run of 4 helical transmembrane segments spans residues 33 to 53 (FGSLLGACLIIQTITGLFLAM), 77 to 98 (WMIRHLHANGASMLFICLFLHI), 113 to 133 (WNIGIILLFMTMMTAFMGYVL), and 178 to 198 (FFTLHFMLPFIITALTTLHLL). Positions 83 and 97 each coordinate heme b. 2 residues coordinate heme b: His-182 and His-196. His-201 provides a ligand contact to a ubiquinone. The next 4 helical transmembrane spans lie at 226–246 (IKDILGLLLFLLALMTLTLLS), 288–308 (LGGVMALMLSILILTTIPALH), 320–340 (LSQFLYWLLITDLLVLTWIGG), and 347–367 (FITIGQVASVLYFTTILLLMP).

It belongs to the cytochrome b family. As to quaternary structure, the cytochrome bc1 complex contains 11 subunits: 3 respiratory subunits (MT-CYB, CYC1 and UQCRFS1), 2 core proteins (UQCRC1 and UQCRC2) and 6 low-molecular weight proteins (UQCRH/QCR6, UQCRB/QCR7, UQCRQ/QCR8, UQCR10/QCR9, UQCR11/QCR10 and a cleavage product of UQCRFS1). This cytochrome bc1 complex then forms a dimer. Heme b serves as cofactor.

The protein localises to the mitochondrion inner membrane. Component of the ubiquinol-cytochrome c reductase complex (complex III or cytochrome b-c1 complex) that is part of the mitochondrial respiratory chain. The b-c1 complex mediates electron transfer from ubiquinol to cytochrome c. Contributes to the generation of a proton gradient across the mitochondrial membrane that is then used for ATP synthesis. This chain is Cytochrome b (MT-CYB), found in Pongo pygmaeus (Bornean orangutan).